Consider the following 90-residue polypeptide: Probable small nuclear ribonucleoprotein E (90 aa).

The Sm domain maps to 14–89 (VNLIFRYLQN…ITLIHAAAQE (76 aa)).

It belongs to the snRNP Sm proteins family. As to quaternary structure, core component of the spliceosomal U1, U2, U4 and U5 small nuclear ribonucleoproteins (snRNPs), the building blocks of the spliceosome.

The protein resides in the nucleus. The protein localises to the cytoplasm. It localises to the cytosol. Its function is as follows. Plays a role in pre-mRNA splicing as a core component of the spliceosomal U1, U2, U4 and U5 small nuclear ribonucleoproteins (snRNPs), the building blocks of the spliceosome. This Caenorhabditis briggsae protein is Probable small nuclear ribonucleoprotein E (snr-6).